The chain runs to 331 residues: L-lactate dehydrogenase A chain (331 aa).

NAD(+) is bound by residues 29-57 (GMVGMASAISILLKDLCDELAMVDVMEDK) and arginine 98. 3 residues coordinate substrate: arginine 105, asparagine 137, and arginine 168. Position 137 (asparagine 137) interacts with NAD(+). Histidine 192 serves as the catalytic Proton acceptor. Threonine 247 is a binding site for substrate.

This sequence belongs to the LDH/MDH superfamily. LDH family. As to quaternary structure, homotetramer.

The protein localises to the cytoplasm. The catalysed reaction is (S)-lactate + NAD(+) = pyruvate + NADH + H(+). It functions in the pathway fermentation; pyruvate fermentation to lactate; (S)-lactate from pyruvate: step 1/1. Functionally, interconverts simultaneously and stereospecifically pyruvate and lactate with concomitant interconversion of NADH and NAD(+). The polypeptide is L-lactate dehydrogenase A chain (ldha) (Dissostichus eleginoides (Patagonian toothfish)).